Consider the following 350-residue polypeptide: MAQWTLLIVFFCVATAAAGLSFHDSNPIRMVSDMEEQLLQVIGESRHAVSFARFANRYGKRYDTVDEMKRRFKIFSENLQLIKSTNKKRLGYTLGVNHFADWTWEEFRSHRLGAAQNCSATLKGNHRITDVVLPAEKDWRKEGIVSEVKDQGHCGSCWTFSTTGALESAYAQAFGKNISLSEQQLVDCAGAYNNFGCNGGLPSQAFEYIKYNGGLETEEAYPYTGQNGLCKFTSENVAVQVLGSVNITLGAEDELKHAVAFARPVSVAFQVVDDFRLYKKGVYTSTTCGSTPMDVNHAVLAVGYGIEDGVPYWLIKNSWGGEWGDHGYFKMEMGKNMCGVATCSSYPVVA.

Residues 1–19 form the signal peptide; it reads MAQWTLLIVFFCVATAAAG. Residues 20–113 constitute a propeptide, activation peptide; the sequence is LSFHDSNPIR…WEEFRSHRLG (94 aa). An N-linked (GlcNAc...) asparagine glycan is attached at N117. A propeptide spans 122-132 (removed in mature form); sequence LKGNHRITDVV. Intrachain disulfides connect C154–C197 and C188–C230. The active site involves C157. N177 carries an N-linked (GlcNAc...) asparagine glycan. An N-linked (GlcNAc...) asparagine glycan is attached at N246. Residues C288 and C338 are joined by a disulfide bond. Residues H297 and N317 contribute to the active site.

It belongs to the peptidase C1 family. As to quaternary structure, interacts with KPI104 and KPI106. Composed of a mini chain and a large chain. The large chain may be split into heavy and light chain. All chains are held together by disulfide bonds.

It localises to the vacuole. The protein resides in the lysosome. The enzyme catalyses Hydrolysis of proteins, acting as an aminopeptidase (notably, cleaving Arg-|-Xaa bonds) as well as an endopeptidase.. In terms of biological role, may play a role in proteolysis leading to mobilization of nitrogen during senescence and starvation. In Medicago truncatula (Barrel medic), this protein is Pro-cathepsin H.